Consider the following 253-residue polypeptide: Chemotaxis protein PomA (253 aa).

4 helical membrane-spanning segments follow: residues 6 to 26, 28 to 48, 146 to 166, and 180 to 200; these read LLGLIGGFAFVIMAMVLGGSI, MFVDVTSILIVVGGSIFVVLM, FGDVAPAMGMIGTLVGLVAML, and AVALLTTLYGAILSNMVFFPI. The Cytoplasmic segment spans residues 201-253; the sequence is ADKLSLRRDQETLNRRLIMDGVLAIQDGQNPRVIDSYLKNYLNEGKRALEIDE.

It belongs to the MotA family. Each stator complex is composed of 4 PomA and 2 PomB subunits. 2 A subunits and 1 B subunit are thought to form a single ion channel, so that each stator complex contains two channels.

Its subcellular location is the cell inner membrane. Its function is as follows. PomA and PomB comprise the stator element of the flagellar motor complex. Required for rotation of the flagellar motor. Probable transmembrane proton channel. The sequence is that of Chemotaxis protein PomA (pomA) from Vibrio alginolyticus.